Here is a 169-residue protein sequence, read N- to C-terminus: Putative pre-16S rRNA nuclease (169 aa).

Positions Met-1–Arg-19 are enriched in basic and acidic residues. A disordered region spans residues Met-1–Arg-22.

Belongs to the YqgF nuclease family.

It localises to the cytoplasm. In terms of biological role, could be a nuclease involved in processing of the 5'-end of pre-16S rRNA. The chain is Putative pre-16S rRNA nuclease from Mycobacterium sp. (strain JLS).